Reading from the N-terminus, the 485-residue chain is Ribulose bisphosphate carboxylase large chain (485 aa).

Positions 1–2 are excised as a propeptide; it reads MS. P3 carries the post-translational modification N-acetylproline. K14 is modified (N6,N6,N6-trimethyllysine). 2 residues coordinate substrate: N123 and T173. Residue K175 is the Proton acceptor of the active site. K177 is a substrate binding site. K201, D203, and E204 together coordinate Mg(2+). K201 bears the N6-carboxylysine mark. The Proton acceptor role is filled by H294. Residues R295, H327, and S379 each contribute to the substrate site.

This sequence belongs to the RuBisCO large chain family. Type I subfamily. Heterohexadecamer of 8 large chains and 8 small chains; disulfide-linked. The disulfide link is formed within the large subunit homodimers. Mg(2+) serves as cofactor. Post-translationally, the disulfide bond which can form in the large chain dimeric partners within the hexadecamer appears to be associated with oxidative stress and protein turnover.

Its subcellular location is the plastid. It is found in the chloroplast. It carries out the reaction 2 (2R)-3-phosphoglycerate + 2 H(+) = D-ribulose 1,5-bisphosphate + CO2 + H2O. The enzyme catalyses D-ribulose 1,5-bisphosphate + O2 = 2-phosphoglycolate + (2R)-3-phosphoglycerate + 2 H(+). In terms of biological role, ruBisCO catalyzes two reactions: the carboxylation of D-ribulose 1,5-bisphosphate, the primary event in carbon dioxide fixation, as well as the oxidative fragmentation of the pentose substrate in the photorespiration process. Both reactions occur simultaneously and in competition at the same active site. In Flaveria pringlei, this protein is Ribulose bisphosphate carboxylase large chain.